The primary structure comprises 256 residues: Peroxisomal membrane protein PMP30A (256 aa).

It belongs to the peroxin-11 family.

The protein localises to the peroxisome membrane. Involved in peroxisomal proliferation. Could participate in peroxisomal elongation or fission. May be involved in parceling of peroxisomes into regular quanta. The protein is Peroxisomal membrane protein PMP30A (PEX11A) of Candida boidinii (Yeast).